Consider the following 282-residue polypeptide: 2-dehydro-3-deoxyphosphooctonate aldolase (282 aa).

It belongs to the KdsA family.

Its subcellular location is the cytoplasm. It carries out the reaction D-arabinose 5-phosphate + phosphoenolpyruvate + H2O = 3-deoxy-alpha-D-manno-2-octulosonate-8-phosphate + phosphate. It participates in carbohydrate biosynthesis; 3-deoxy-D-manno-octulosonate biosynthesis; 3-deoxy-D-manno-octulosonate from D-ribulose 5-phosphate: step 2/3. It functions in the pathway bacterial outer membrane biogenesis; lipopolysaccharide biosynthesis. In Chromobacterium violaceum (strain ATCC 12472 / DSM 30191 / JCM 1249 / CCUG 213 / NBRC 12614 / NCIMB 9131 / NCTC 9757 / MK), this protein is 2-dehydro-3-deoxyphosphooctonate aldolase.